A 274-amino-acid polypeptide reads, in one-letter code: MILTPIRRYGAMILMLLTLVFSSEVLAKTHTTTASQKSHLTKASNKQVSSKQEYSRNSAKSSSLPDLRKYPSGTPRKKAFLRTVMPYITSQNAAITAERNWLISKQYQGQWSPAERARLKDIAKRYKVKWSGNTRKIPWNTLLERVDIIPTSMVATMAAAESGWGTSKLARNNNNLFGMKCMKGRCTNAPGKVKGYSQFSSVKESVSAYVTNLNTHPAYSSFRKSRAQLRKADQEVTATAMIHKLKGYSTKGKSYNNYLFAMYQDNQRLIAAHM.

A compositionally biased stretch (polar residues) spans 32–64 (TTASQKSHLTKASNKQVSSKQEYSRNSAKSSSL). The segment at 32–74 (TTASQKSHLTKASNKQVSSKQEYSRNSAKSSSLPDLRKYPSGT) is disordered. 247-254 (GYSTKGKS) serves as a coordination point for ATP.

In Escherichia coli (strain K12), this protein is Protein bax (bax).